The following is a 149-amino-acid chain: Transcriptional repressor NrdR (149 aa).

Residues 3 to 34 fold into a zinc finger; the sequence is CPFCSAVDTKVIDSRLVAEGHQVRRRRECLLC. The 91-residue stretch at 49–139 folds into the ATP-cone domain; sequence PRVIKSNGSR…VYRSFEDIRE (91 aa).

Belongs to the NrdR family. It depends on Zn(2+) as a cofactor.

Its function is as follows. Negatively regulates transcription of bacterial ribonucleotide reductase nrd genes and operons by binding to NrdR-boxes. The chain is Transcriptional repressor NrdR from Aeromonas salmonicida (strain A449).